The primary structure comprises 506 residues: Deoxyguanosinetriphosphate triphosphohydrolase (506 aa).

The region spanning 66–274 (RLTHSLEVQQ…MEAADDISYC (209 aa)) is the HD domain.

Belongs to the dGTPase family. Type 1 subfamily. In terms of assembly, homotetramer. Mg(2+) serves as cofactor.

The enzyme catalyses dGTP + H2O = 2'-deoxyguanosine + triphosphate + H(+). Functionally, dGTPase preferentially hydrolyzes dGTP over the other canonical NTPs. This Yersinia pestis bv. Antiqua (strain Antiqua) protein is Deoxyguanosinetriphosphate triphosphohydrolase.